The following is a 478-amino-acid chain: Zinc metalloproteinase/disintegrin (478 aa).

The signal sequence occupies residues 1-20 (MIQVLLVTICLAAFPYQGSS). A propeptide spanning residues 21–188 (IILESGNVND…PIKKVSQLNL (168 aa)) is cleaved from the precursor. A Peptidase M12B domain is found at 194–391 (RHVDIVVVVD…QNPQCILNKP (198 aa)). Cysteine 207 and cysteine 248 form a disulfide bridge. Asparagine 279 carries an N-linked (GlcNAc...) (complex) asparagine glycan. 3 disulfides stabilise this stretch: cysteine 305/cysteine 386, cysteine 345/cysteine 370, and cysteine 347/cysteine 353. Histidine 330 is a Zn(2+) binding site. Glutamate 331 is a catalytic residue. Positions 334 and 340 each coordinate Zn(2+). A glycan (N-linked (GlcNAc...) (complex) asparagine) is linked at asparagine 369. The propeptide occupies 392-407 (LRTVSIPVSGNEHLEA). Residues 397 to 478 (IPVSGNEHLE…ADCPRYHSHA (82 aa)) form the Disintegrin domain. 6 disulfide bridges follow: cysteine 411–cysteine 426, cysteine 413–cysteine 421, cysteine 420–cysteine 443, cysteine 434–cysteine 440, cysteine 439–cysteine 464, and cysteine 452–cysteine 471. The Cell attachment site motif lies at 456–458 (RGD). Residues 476–478 (SHA) constitute a propeptide that is removed on maturation.

This sequence belongs to the venom metalloproteinase (M12B) family. P-II subfamily. P-IIa sub-subfamily. As to quaternary structure, monomeric (disintegrin). Zn(2+) serves as cofactor. In terms of processing, glycans are composed of 4 GlcNAc, 3 Man, 2 Gal, 2 NeuAC and 1 Fuc residue. As to expression, expressed by the venom gland.

The protein resides in the secreted. In terms of biological role, impairs hemostasis in the envenomed animal. Functionally, inhibits platelet aggregation induced by ADP, thrombin, platelet-activating factor and collagen. Acts by inhibiting fibrinogen interaction with platelet receptors alpha-IIb/beta-3 (ITGA2B/ITGB3). This Calloselasma rhodostoma (Malayan pit viper) protein is Zinc metalloproteinase/disintegrin.